The following is an 896-amino-acid chain: Alanine--tRNA ligase (896 aa).

A compositionally biased stretch (basic and acidic residues) spans Gln-439–Ser-456. Residues Gln-439–Arg-459 form a disordered region. His-579, His-583, Cys-681, and His-685 together coordinate Zn(2+).

Belongs to the class-II aminoacyl-tRNA synthetase family. Zn(2+) serves as cofactor.

It localises to the cytoplasm. The enzyme catalyses tRNA(Ala) + L-alanine + ATP = L-alanyl-tRNA(Ala) + AMP + diphosphate. In terms of biological role, catalyzes the attachment of alanine to tRNA(Ala) in a two-step reaction: alanine is first activated by ATP to form Ala-AMP and then transferred to the acceptor end of tRNA(Ala). Also edits incorrectly charged Ser-tRNA(Ala) and Gly-tRNA(Ala) via its editing domain. The polypeptide is Alanine--tRNA ligase (Nocardioides sp. (strain ATCC BAA-499 / JS614)).